Reading from the N-terminus, the 527-residue chain is Protein Lilipod (527 aa).

At 1–22 (MDEEEEEEVTDLKLQLFHNTVR) the chain is on the extracellular side. The helical transmembrane segment at 23-43 (EHIIFLLLIILLYSSSYVVVS) threads the bilayer. The Cytoplasmic segment spans residues 44–65 (RFRRRDRDDLYSNDEDEVLVYR). Residues 66–86 (ISFWLCTFTLAVAEGAAMLLP) traverse the membrane as a helical segment. The Extracellular segment spans residues 87 to 117 (VSIASNEVLLLYPNSYYVKWLNSSLIQGLWN). Residues 118–138 (HVFLFSNLSLFIFLPFVYLFS) traverse the membrane as a helical segment. At 139 to 160 (ESTGFVGNKKGILPRVYETFTV) the chain is on the cytoplasmic side. Residues 161–181 (FMLMAIIVLVLTAVLSAVFGI) form a helical membrane-spanning segment. The Extracellular segment spans residues 182-194 (EKLQFFWFLNLGS). Residues 195-215 (VHLPFLYSCVSFLGVMLMLIC) traverse the membrane as a helical segment. At 216–341 (TPYGFVRLFG…LRTSSTFQRT (126 aa)) the chain is on the cytoplasmic side. Residues 342–362 (FVYPLAMLLLLFCTAVTILLV) traverse the membrane as a helical segment. The Extracellular segment spans residues 363 to 395 (VQNTLELLIGIKALPLSTRQFALGISSLSKLGP). A helical membrane pass occupies residues 396–416 (FGAGLEVCLIFYLGATSVVGF). Over 417-433 (YSMPFMRKVCPKRRQTS) the chain is Cytoplasmic. Residues 434-454 (LPQLMLNCGFMLVLSSALPLL) form a helical membrane-spanning segment. At 455-468 (SRIIGITNFDLLGD) the chain is on the extracellular side. The chain crosses the membrane as a helical span at residues 469–489 (FGAIEWLGNFQIVLLYNLVFG). The Cytoplasmic portion of the chain corresponds to 490–527 (TTTALCLANKFTATVRRELRARLVENYVLFTNYISFIN).

This sequence belongs to the LIMR family. In terms of tissue distribution, in the ovary, detected in germline stem cells and their progeny. Also detected in the somatic follicular epithelium.

Its subcellular location is the cell membrane. Functionally, required during oogenesis to promote self-renewal of germline stem cells, probably by enhancing BMP signaling activity. The polypeptide is Protein Lilipod (Drosophila melanogaster (Fruit fly)).